The chain runs to 244 residues: tRNA (guanine-N(1)-)-methyltransferase (244 aa).

Residues G113 and 133–138 contribute to the S-adenosyl-L-methionine site; that span reads IGDYVL.

The protein belongs to the RNA methyltransferase TrmD family. In terms of assembly, homodimer.

It localises to the cytoplasm. It carries out the reaction guanosine(37) in tRNA + S-adenosyl-L-methionine = N(1)-methylguanosine(37) in tRNA + S-adenosyl-L-homocysteine + H(+). In terms of biological role, specifically methylates guanosine-37 in various tRNAs. This chain is tRNA (guanine-N(1)-)-methyltransferase, found in Bacillus anthracis (strain A0248).